The following is a 470-amino-acid chain: Sulfate adenylyltransferase subunit 1 (470 aa).

Residues 22 to 236 (KELLRFITCG…YLETIKIDYA (215 aa)) form the tr-type G domain. The tract at residues 31-38 (GSVDDGKS) is G1. 31-38 (GSVDDGKS) provides a ligand contact to GTP. The interval 89–93 (GITID) is G2. The tract at residues 110–113 (DTPG) is G3. GTP-binding positions include 110–114 (DTPGH) and 165–168 (NKMD). The tract at residues 165–168 (NKMD) is G4. Residues 202–204 (SAL) are G5.

It belongs to the TRAFAC class translation factor GTPase superfamily. Classic translation factor GTPase family. CysN/NodQ subfamily. As to quaternary structure, heterodimer composed of CysD, the smaller subunit, and CysN.

It carries out the reaction sulfate + ATP + H(+) = adenosine 5'-phosphosulfate + diphosphate. It participates in sulfur metabolism; hydrogen sulfide biosynthesis; sulfite from sulfate: step 1/3. With CysD forms the ATP sulfurylase (ATPS) that catalyzes the adenylation of sulfate producing adenosine 5'-phosphosulfate (APS) and diphosphate, the first enzymatic step in sulfur assimilation pathway. APS synthesis involves the formation of a high-energy phosphoric-sulfuric acid anhydride bond driven by GTP hydrolysis by CysN coupled to ATP hydrolysis by CysD. The protein is Sulfate adenylyltransferase subunit 1 of Francisella tularensis subsp. novicida (strain U112).